Here is a 419-residue protein sequence, read N- to C-terminus: 26S proteasome regulatory subunit 8 homolog A (419 aa).

A2 is subject to N-acetylalanine. 202-209 (GPPGTGKT) lines the ATP pocket. Residue K406 forms a Glycyl lysine isopeptide (Lys-Gly) (interchain with G-Cter in ubiquitin) linkage.

Belongs to the AAA ATPase family. Component of the 19S regulatory particle (RP/PA700) base subcomplex of the 26S proteasome. The 26S proteasome is composed of a core protease (CP), known as the 20S proteasome, capped at one or both ends by the 19S regulatory particle (RP/PA700). The RP/PA700 complex is composed of at least 17 different subunits in two subcomplexes, the base and the lid, which form the portions proximal and distal to the 20S proteolytic core, respectively.

It is found in the cytoplasm. It localises to the nucleus. The 26S proteasome is involved in the ATP-dependent degradation of ubiquitinated proteins. The regulatory (or ATPase) complex confers ATP dependency and substrate specificity to the 26S complex. This chain is 26S proteasome regulatory subunit 8 homolog A (RPT6A), found in Arabidopsis thaliana (Mouse-ear cress).